A 260-amino-acid polypeptide reads, in one-letter code: Large ribosomal subunit protein uL4 (260 aa).

The protein belongs to the universal ribosomal protein uL4 family. In terms of assembly, part of the 50S ribosomal subunit.

Its function is as follows. One of the primary rRNA binding proteins, this protein initially binds near the 5'-end of the 23S rRNA. It is important during the early stages of 50S assembly. It makes multiple contacts with different domains of the 23S rRNA in the assembled 50S subunit and ribosome. Functionally, forms part of the polypeptide exit tunnel. This is Large ribosomal subunit protein uL4 from Methanopyrus kandleri (strain AV19 / DSM 6324 / JCM 9639 / NBRC 100938).